The sequence spans 404 residues: p-hydroxybenzoate hydroxylase (404 aa).

Residues glutamate 35, 45–50 (RIRAGI), and glutamine 105 each bind FAD. Substrate is bound by residues tyrosine 203, 214–216 (SMR), and tyrosine 224. Aspartate 288 serves as a coordination point for FAD. Residue proline 295 participates in substrate binding. 301–302 (LN) provides a ligand contact to FAD.

The protein belongs to the aromatic-ring hydroxylase family. In terms of assembly, homodimer. FAD is required as a cofactor.

It carries out the reaction 4-hydroxybenzoate + NADPH + O2 + H(+) = 3,4-dihydroxybenzoate + NADP(+) + H2O. It participates in aromatic compound metabolism; benzoate degradation via hydroxylation; 3,4-dihydroxybenzoate from benzoate: step 2/2. Functionally, catalyzes the incorporation of an atom of dioxygen into p-hydroxybenzoate (p-OHB) to form 3,4-dihydroxybenzoate (3,4DOHB). The reaction occurs in two parts: reduction of the flavin adenine dinucleotide (FAD) in the enzyme by reduced nicotinamide adenine dinucleotide phosphate (NADPH) in response to binding p-hydroxybenzoate to the enzyme and oxidation of reduced FAD with oxygen to form a hydroperoxide, which then oxygenates p-hydroxybenzoate. The sequence is that of p-hydroxybenzoate hydroxylase (pobA) from Acinetobacter baylyi (strain ATCC 33305 / BD413 / ADP1).